The sequence spans 246 residues: uncharacterized protein (246 aa).

This is an uncharacterized protein from Thermotoga maritima (strain ATCC 43589 / DSM 3109 / JCM 10099 / NBRC 100826 / MSB8).